The following is a 214-amino-acid chain: Phosphatidylcholine transfer protein (214 aa).

An N-acetylmethionine modification is found at Met1. In terms of domain architecture, START spans 1-212 (MAGPAAHFSD…MVKACQNYHK (212 aa)). Tyr72 and Arg78 together coordinate a 1,2-diacyl-sn-glycero-3-phosphocholine. Ser139 is subject to Phosphoserine. Gln157 serves as a coordination point for a 1,2-diacyl-sn-glycero-3-phosphocholine.

In terms of assembly, interacts with ACOT13/THEM2.

The protein resides in the cytoplasm. Its function is as follows. Lipid transfer protein that promotes intermembrane transfer of phosphatidylcholines but no other phospholipids. Binds a single lipid molecule. May play a role in hepatocellular selection and transport of phosphatidylcholines during bile formation. The sequence is that of Phosphatidylcholine transfer protein (Pctp) from Rattus norvegicus (Rat).